The sequence spans 62 residues: MKVNDRVTVKTDGGPRRPGVVLAVEEFSEGTMYLVALEDYPLGIWFFNEAGHQDGIFVEKAE.

The protein belongs to the DsrB family.

The polypeptide is Protein DsrB (Shigella flexneri serotype 5b (strain 8401)).